Consider the following 156-residue polypeptide: Succinate dehydrogenase assembly factor 2-A, mitochondrial (156 aa).

A mitochondrion-targeting transit peptide spans 1-24 (MLRQFLVSTAVRRVVVPSMAQTRC). A disordered region spans residues 35–62 (TPGEIVDYDDPPHIPVPEYPSRPDEPLE).

It belongs to the SDHAF2 family. Interacts with the flavoprotein subunit within the SDH catalytic dimer.

The protein resides in the mitochondrion matrix. Functionally, plays an essential role in the assembly of succinate dehydrogenase (SDH), an enzyme complex (also referred to as respiratory complex II) that is a component of both the tricarboxylic acid (TCA) cycle and the mitochondrial electron transport chain, and which couples the oxidation of succinate to fumarate with the reduction of ubiquinone (coenzyme Q) to ubiquinol. Required for flavinylation (covalent attachment of FAD) of the flavoprotein subunit of the SDH catalytic dimer. The polypeptide is Succinate dehydrogenase assembly factor 2-A, mitochondrial (Drosophila ananassae (Fruit fly)).